Here is a 56-residue protein sequence, read N- to C-terminus: MAKDKTTLPPTGAGLMRFFDEDTRAIKVSPKGVIAIVLVLIAFEVFLHLFGPSIFG.

At 1–29 (MAKDKTTLPPTGAGLMRFFDEDTRAIKVS) the chain is on the cytoplasmic side. A helical membrane pass occupies residues 30 to 51 (PKGVIAIVLVLIAFEVFLHLFG). Topologically, residues 52–56 (PSIFG) are extracellular.

This sequence belongs to the SEC61-beta family. Component of the protein translocase complex. Heterotrimer consisting of alpha (SecY), beta (SecG) and gamma (SecE) subunits. Can form oligomers of the heterotrimer.

Its subcellular location is the cell membrane. Involved in protein export. The function of the beta subunit is unknown, but it may be involved in stabilization of the trimeric complex. This Thermococcus gammatolerans (strain DSM 15229 / JCM 11827 / EJ3) protein is Preprotein translocase subunit SecG.